The chain runs to 230 residues: uncharacterized protein (230 aa).

Transmembrane regions (helical) follow at residues 34–54, 56–76, 87–107, 111–131, 146–166, 167–187, and 205–225; these read FFAG…MNFQ, VVQY…GLMF, MLFA…GMVI, GLGA…LMSV, MLFI…FLGS, PMFQ…YIAY, and VSLY…IGIF.

The protein belongs to the BI1 family.

The protein localises to the cell membrane. This is an uncharacterized protein from Helicobacter pylori (strain J99 / ATCC 700824) (Campylobacter pylori J99).